The chain runs to 316 residues: Initiation factor TFIIB homolog (316 aa).

Belongs to the asfivirus C315R family.

Putative initation factor. This Ornithodoros (relapsing fever ticks) protein is Initiation factor TFIIB homolog.